The primary structure comprises 293 residues: Ethanolamine ammonia-lyase small subunit (293 aa).

Residues valine 207 and glutamate 228 each contribute to the adenosylcob(III)alamin site.

This sequence belongs to the EutC family. The basic unit is a heterodimer which dimerizes to form tetramers. The heterotetramers trimerize; 6 large subunits form a core ring with 6 small subunits projecting outwards. It depends on adenosylcob(III)alamin as a cofactor.

The protein localises to the bacterial microcompartment. It carries out the reaction ethanolamine = acetaldehyde + NH4(+). The protein operates within amine and polyamine degradation; ethanolamine degradation. Its function is as follows. Catalyzes the deamination of various vicinal amino-alcohols to oxo compounds. Allows this organism to utilize ethanolamine as the sole source of nitrogen and carbon in the presence of external vitamin B12. The chain is Ethanolamine ammonia-lyase small subunit from Listeria monocytogenes serotype 4a (strain HCC23).